Consider the following 153-residue polypeptide: Aspartate carbamoyltransferase regulatory chain (153 aa).

Residues C109, C114, C138, and C141 each coordinate Zn(2+).

Belongs to the PyrI family. In terms of assembly, contains catalytic and regulatory chains. Requires Zn(2+) as cofactor.

Involved in allosteric regulation of aspartate carbamoyltransferase. This chain is Aspartate carbamoyltransferase regulatory chain, found in Nitrosopumilus maritimus (strain SCM1).